A 556-amino-acid polypeptide reads, in one-letter code: MDPKAEGNGENITETAAGNVETSDFVNLKRQKREGVNSTGMSEIDMTGSQETPEHNMHGSPTHTDDLGPRLDADMLDSQSSHVSSSAQGNRSEVENELSNLFAKMALPGHDRRTDEYILVRQTGQDKFAGTTKCNLDHLPTKAEFNASCRLYRDGVGNYYPPPLAFERIDIPEQLAAQLHNLEPREQSKQCFQYKLEVWNRAHAEMGITGTDIFYQTDKNIKLDRNYKLRPEDRYIQTEKYGRREIQKRYEHQFQAGSLLPDILIKTPQNDIHFSYRFAGDAYANKRFEEFERAIKTKYGSDTEIKLKSKSGIMHDSKYLESWERGSADIRFAEFAGENRAHNKQFPAATVNMGRQPDGQGGMTRDRHVSVDYLLQNLPNSPWTQALKEGKLWDRVQVLARDGNRYMSPSRLEYSDPEHFTQLMDQVGLPVSMGRQSHANSVKFEQFDRQAAVIVADGPNLREVPDLSPEKLQQLSQKDVLIADRNEKGQRTGTYTNVVEYERLMMKLPSDAAQLLAEPSDRYSRAFVRPEPALPPISDSRRTYESRPRGPTVNSL.

2 disordered regions span residues 1 to 95 (MDPK…SEVE) and 527 to 556 (FVRP…VNSL). 2 stretches are compositionally biased toward polar residues: residues 10–25 (ENIT…TSDF) and 36–51 (VNST…GSQE). Composition is skewed to basic and acidic residues over residues 52-73 (TPEH…RLDA) and 539-548 (DSRRTYESRP).

Interacts with host VIP2 that promotes T-DNA integration into the host genome. Forms a complex made of virE2 and host proteins VIP1 and VBF. Forms heterodimers with the chaperone protein virE1 that prevent virE2 anarchic homopolymerization. Interacts with A.thaliana VIP1 that mediates its translocation to the host nucleus. Forms a complex made of VirE2, host VIP1 and VIP2 and single-stranded DNA (ssDNA).

It is found in the secreted. The protein resides in the host nucleus. In terms of biological role, involved in DNA transformation; mediates the nuclear uptake of single-stranded DNA copies of the transferred DNA (T-DNA) element. Binds single-stranded but not double-stranded DNA regardless of nucleotide sequence composition. In Agrobacterium fabrum (strain C58 / ATCC 33970) (Agrobacterium tumefaciens (strain C58)), this protein is Single-strand DNA-binding protein (virE2).